A 178-amino-acid chain; its full sequence is MNPLLQDYARILLEWNQTHNLSGARNLSELEPQITDALKPLEFVKDFKSCLDIGSGAGLPAIPLALEKPEAQFILLEPRVKRAAFLNYLKSVLPLNNIEIIKKRLEDYQNLLQVDLITSRAVASSSFLIEKSQRFLKDKGYFLFYKGEQLKNEIAYKTTECFMHQKRVYFYKSKESLC.

Residues glycine 54, leucine 59, 105-106 (LE), and arginine 120 contribute to the S-adenosyl-L-methionine site.

The protein belongs to the methyltransferase superfamily. RNA methyltransferase RsmG family.

The protein resides in the cytoplasm. It carries out the reaction guanosine(527) in 16S rRNA + S-adenosyl-L-methionine = N(7)-methylguanosine(527) in 16S rRNA + S-adenosyl-L-homocysteine. In terms of biological role, specifically methylates the N7 position of guanine in position 527 of 16S rRNA. In Helicobacter pylori (strain J99 / ATCC 700824) (Campylobacter pylori J99), this protein is Ribosomal RNA small subunit methyltransferase G.